The sequence spans 77 residues: NAD(P)H-quinone oxidoreductase subunit L (77 aa).

Helical transmembrane passes span 10–30 and 48–68; these read LLIATLYLSLSVTYLLVLPAG and LVMYFFVFFLFPGMLLLSPFL.

This sequence belongs to the complex I NdhL subunit family. NDH-1 can be composed of about 15 different subunits; different subcomplexes with different compositions have been identified which probably have different functions.

It is found in the cellular thylakoid membrane. It catalyses the reaction a plastoquinone + NADH + (n+1) H(+)(in) = a plastoquinol + NAD(+) + n H(+)(out). It carries out the reaction a plastoquinone + NADPH + (n+1) H(+)(in) = a plastoquinol + NADP(+) + n H(+)(out). Functionally, NDH-1 shuttles electrons from an unknown electron donor, via FMN and iron-sulfur (Fe-S) centers, to quinones in the respiratory and/or the photosynthetic chain. The immediate electron acceptor for the enzyme in this species is believed to be plastoquinone. Couples the redox reaction to proton translocation, and thus conserves the redox energy in a proton gradient. Cyanobacterial NDH-1 also plays a role in inorganic carbon-concentration. The chain is NAD(P)H-quinone oxidoreductase subunit L from Picosynechococcus sp. (strain ATCC 27264 / PCC 7002 / PR-6) (Agmenellum quadruplicatum).